Here is a 389-residue protein sequence, read N- to C-terminus: Acetyl-CoA decarbonylase/synthase complex subunit delta (389 aa).

The protein belongs to the CdhD family. As to quaternary structure, heterodimer of delta and gamma chains. The ACDS complex is made up of alpha, epsilon, beta, gamma and delta chains with a probable stoichiometry of (alpha(2)epsilon(2))(4)-beta(8)-(gamma(1)delta(1))(8).

In terms of biological role, part of a complex that catalyzes the reversible cleavage of acetyl-CoA, allowing autotrophic growth from CO(2). Probably maintains the overall quaternary structure of the ACDS complex. The chain is Acetyl-CoA decarbonylase/synthase complex subunit delta from Methanothermobacter thermautotrophicus (strain ATCC 29096 / DSM 1053 / JCM 10044 / NBRC 100330 / Delta H) (Methanobacterium thermoautotrophicum).